A 335-amino-acid chain; its full sequence is Transcriptional activator NphR (335 aa).

The 99-residue stretch at 231–329 (TRVQRVIEQN…GSSPGLYRKE (99 aa)) folds into the HTH araC/xylS-type domain. 2 DNA-binding regions (H-T-H motif) span residues 249–270 (SDIA…NAEG) and 296–319 (VADV…RSTF).

Its function is as follows. Transcriptional activator of nphA1 and nphA2 involved in the degradation of 4-nitrophenol (4-NP). In Rhodococcus sp, this protein is Transcriptional activator NphR (nphR).